Here is an 89-residue protein sequence, read N- to C-terminus: MSTSVKHREFVGEPMGDKEVTCIAGIGPTYGTKLTDAGFDKAYVLFGQYLLLKKDEDLFIEWLKETAGVTANHAKTAFNCLNEWADQFM.

Belongs to the BAF family. In terms of assembly, interacts with emr-1 and lem-2. Interacts with lem-4l, leading to decreased phosphorylation by VRK1 and promoting dephosphorylation by protein phosphatase 2A (PP2A). Phosphorylated by vrk-1. Phosphorylation by vrk-1 in mitosis is essential to achieve correct timing of recruitment of nuclear envelope components during nuclear envelope assembly. Dephosphorylated by protein phosphatase 2A (PP2A) following interaction with lem-4l during mitotic exit, leading to mitotic nuclear envelope reassembly.

It localises to the nucleus. DNA-binding protein which plays an essential role in nuclear envelope formation. Required for normal chromosome segregation during mitosis. Associates with the nuclear lamina via its interaction with LEM domain containing proteins emr-1 and lem-2. In association with lem-3, plays a role in radiation-induced DNA damage repair response. This Caenorhabditis elegans protein is Barrier-to-autointegration factor 1 (baf-1).